Here is a 253-residue protein sequence, read N- to C-terminus: Phosphate import ATP-binding protein PstB (253 aa).

The 241-residue stretch at 8 to 248 folds into the ABC transporter domain; the sequence is IQVRDLDLFY…PRDKRTEDYI (241 aa). Residue 40-47 coordinates ATP; that stretch reads GPSGCGKS.

Belongs to the ABC transporter superfamily. Phosphate importer (TC 3.A.1.7) family. The complex is composed of two ATP-binding proteins (PstB), two transmembrane proteins (PstC and PstA) and a solute-binding protein (PstS).

It is found in the cell membrane. It carries out the reaction phosphate(out) + ATP + H2O = ADP + 2 phosphate(in) + H(+). Its function is as follows. Part of the ABC transporter complex PstSACB involved in phosphate import. Responsible for energy coupling to the transport system. This is Phosphate import ATP-binding protein PstB from Clostridium perfringens (strain ATCC 13124 / DSM 756 / JCM 1290 / NCIMB 6125 / NCTC 8237 / Type A).